The following is a 274-amino-acid chain: Large ribosomal subunit protein uL2 (274 aa).

Disordered stretches follow at residues 28–53 and 221–274; these read KPYA…TTRH and RGTA…RTKK. The span at 39–48 shows a compositional bias: low complexity; sequence KSGGRNNNGR. Basic residues predominate over residues 253 to 274; sequence KGKKTRKNKRTEHFIVHRRTKK.

The protein belongs to the universal ribosomal protein uL2 family. Part of the 50S ribosomal subunit. Forms a bridge to the 30S subunit in the 70S ribosome.

One of the primary rRNA binding proteins. Required for association of the 30S and 50S subunits to form the 70S ribosome, for tRNA binding and peptide bond formation. It has been suggested to have peptidyltransferase activity; this is somewhat controversial. Makes several contacts with the 16S rRNA in the 70S ribosome. The sequence is that of Large ribosomal subunit protein uL2 from Proteus mirabilis (strain HI4320).